A 396-amino-acid chain; its full sequence is Jacalin-related lectin 45 (396 aa).

Jacalin-type lectin domains follow at residues 3-138, 144-264, and 270-392; these read KKVT…KTSH, QFRM…NFAV, and VKKL…YVKP.

It belongs to the jacalin lectin family.

The protein is Jacalin-related lectin 45 (JAL45) of Arabidopsis thaliana (Mouse-ear cress).